The primary structure comprises 102 residues: MNGQNIRIRLKAFDHRILDSSTREIVNTAKRTGAQVRGPIPLPTRIEKFTVNRSPHVDKKSREQFEMRTHKRLLDIVDPTPQTVDALMKLDLAAGVDVEIKL.

Belongs to the universal ribosomal protein uS10 family. Part of the 30S ribosomal subunit.

In terms of biological role, involved in the binding of tRNA to the ribosomes. The chain is Small ribosomal subunit protein uS10 from Rhodopseudomonas palustris (strain BisB18).